A 397-amino-acid chain; its full sequence is MDSLANSINQFALEFSKKLAETDEGKNIFFSPWGISTTLAMVYLGTKGTTATQMAQVLQFDTDQDVKSSPENEKKRKVDLNSDQVGEIHFGFQKLISEINNPSNTYVLKTANGIYGEKTYPFHNKYIEDIKTYFGAKPQSVNFVEDSDQIRKDINSWVESQTEGKIPNLLPDDAVDSATKMVLVNALYFKGLWEHQFSVQDTTEKPFRINKTSSKPVQMMSMKKNLEVFHIEKPQATGLRLDYKNRDLSLLLILPEDVCGLDQLEKAITYDQLSEWTSEDMMEMYTVELHLPKFKLEQSYDLKTTLASMGMSDAFNQSKADFSGMSDERNLYLSNVFHKSFVEINEQGTEAAAGSASEISVRIKLPTIEINADHPFIFFIRHNKTNSILFYGRFCSP.

The Nuclear localization signal signature appears at 74-77 (KKRK).

Belongs to the serpin family. Ov-serpin subfamily.

It is found in the nucleus. Its subcellular location is the cytoplasm. Protease inhibitor that may play a role in the regulation of protease activities during hematopoiesis and apoptosis induced by TNF. May regulate protease activities in the cytoplasm and in the nucleus. The polypeptide is Serpin B10 (SERPINB10) (Sorex araneus (Eurasian common shrew)).